A 66-amino-acid polypeptide reads, in one-letter code: Large ribosomal subunit protein uL29 (66 aa).

The protein belongs to the universal ribosomal protein uL29 family.

The chain is Large ribosomal subunit protein uL29 from Caldanaerobacter subterraneus subsp. tengcongensis (strain DSM 15242 / JCM 11007 / NBRC 100824 / MB4) (Thermoanaerobacter tengcongensis).